The primary structure comprises 286 residues: ATP synthase gamma chain (286 aa).

The protein belongs to the ATPase gamma chain family. In terms of assembly, F-type ATPases have 2 components, CF(1) - the catalytic core - and CF(0) - the membrane proton channel. CF(1) has five subunits: alpha(3), beta(3), gamma(1), delta(1), epsilon(1). CF(0) has three main subunits: a, b and c.

It is found in the cell membrane. Functionally, produces ATP from ADP in the presence of a proton gradient across the membrane. The gamma chain is believed to be important in regulating ATPase activity and the flow of protons through the CF(0) complex. This Bacillus cereus (strain G9842) protein is ATP synthase gamma chain.